Here is a 270-residue protein sequence, read N- to C-terminus: 4-hydroxy-tetrahydrodipicolinate reductase (270 aa).

NAD(+)-binding positions include 9–14 (GAGGRM) and glutamate 35. Arginine 36 serves as a coordination point for NADP(+). NAD(+) is bound by residues 99-101 (GTT) and 123-126 (ASNY). Histidine 156 (proton donor/acceptor) is an active-site residue. Histidine 157 lines the (S)-2,3,4,5-tetrahydrodipicolinate pocket. Lysine 160 (proton donor) is an active-site residue. Residue 166–167 (GT) coordinates (S)-2,3,4,5-tetrahydrodipicolinate.

This sequence belongs to the DapB family.

The protein resides in the cytoplasm. It catalyses the reaction (S)-2,3,4,5-tetrahydrodipicolinate + NAD(+) + H2O = (2S,4S)-4-hydroxy-2,3,4,5-tetrahydrodipicolinate + NADH + H(+). The catalysed reaction is (S)-2,3,4,5-tetrahydrodipicolinate + NADP(+) + H2O = (2S,4S)-4-hydroxy-2,3,4,5-tetrahydrodipicolinate + NADPH + H(+). Its pathway is amino-acid biosynthesis; L-lysine biosynthesis via DAP pathway; (S)-tetrahydrodipicolinate from L-aspartate: step 4/4. In terms of biological role, catalyzes the conversion of 4-hydroxy-tetrahydrodipicolinate (HTPA) to tetrahydrodipicolinate. This chain is 4-hydroxy-tetrahydrodipicolinate reductase, found in Histophilus somni (strain 129Pt) (Haemophilus somnus).